Here is a 203-residue protein sequence, read N- to C-terminus: MTRKTRIQTIESAEPEVDENGYDRPSKSQLKREMHELQELGAALIALPKDALKRMPMPEKLDDAVREARRITDHEGKRRQVQYVGRVMRSLLDEETAALRTALDTYNGVNKAETAKLHWIERTREKLLADDAALTDFIRQHPNADPQQGRTLIRNARKEAQQSKPPRYFRELFQWIKNADGPPAQTDSEADDAQDDEDDDRDA.

Disordered stretches follow at residues 1–31 (MTRK…SQLK) and 178–203 (NADG…DRDA). Over residues 21 to 31 (GYDRPSKSQLK) the composition is skewed to basic and acidic residues. Positions 188–203 (SEADDAQDDEDDDRDA) are enriched in acidic residues.

This sequence belongs to the DarP family.

The protein resides in the cytoplasm. In terms of biological role, member of a network of 50S ribosomal subunit biogenesis factors which assembles along the 30S-50S interface, preventing incorrect 23S rRNA structures from forming. Promotes peptidyl transferase center (PTC) maturation. This Paraburkholderia xenovorans (strain LB400) protein is Dual-action ribosomal maturation protein DarP.